The following is a 130-amino-acid chain: Mitochondrial import protein 1 (130 aa).

A disordered region spans residues 1 to 41; that stretch reads MSAEEISNPLAESGVTISSDSEQYSAPESASPQSPSSSSPA. The span at 15-24 shows a compositional bias: polar residues; the sequence is VTISSDSEQY. The segment covering 25 to 41 has biased composition (low complexity); the sequence is SAPESASPQSPSSSSPA.

This sequence belongs to the MIM1 family.

It is found in the mitochondrion outer membrane. Its function is as follows. Required for the assembly of the TOM (translocase of outer membrane) receptor complex, which is responsible for the recognition and translocation of cytosolically synthesized mitochondrial preproteins. The protein is Mitochondrial import protein 1 of Neurospora crassa (strain ATCC 24698 / 74-OR23-1A / CBS 708.71 / DSM 1257 / FGSC 987).